The following is a 411-amino-acid chain: uncharacterized protein (411 aa).

This is an uncharacterized protein from Mycoplasma genitalium (strain ATCC 33530 / DSM 19775 / NCTC 10195 / G37) (Mycoplasmoides genitalium).